A 386-amino-acid polypeptide reads, in one-letter code: Microtubule-binding protein TANGLED1 (386 aa).

5 disordered regions span residues 83–105 (RMRG…GVGG), 140–202 (AAGA…RVRS), 244–266 (HAST…QKRL), 303–330 (PARP…CSFS), and 345–386 (RLSL…ISSR). Basic residues predominate over residues 170–180 (RARRAREKQSH). Positions 181-193 (RGGAATRGADAAT) are enriched in low complexity. A compositionally biased stretch (polar residues) spans 375–386 (TVRTVSSKISSR).

As to expression, expressed in vegetative shoot tips consisting of leaf primordia and the bases of immature leaves, the shoot apical meristem, and unexpanded stem tissue. Strongly expressed in tissues enriched in dividing cells: ear primordia and embryos.

The protein localises to the cytoplasm. The protein resides in the cytoskeleton. Its subcellular location is the spindle. It localises to the phragmoplast. Its function is as follows. Is required for spatial control cell division during leaf development. Through an association with microtubules, acts both for the positioning of cytoskeletal arrays that establish planes of cell division during prophase and for spatial guidance of expanding phragmoplasts toward preestablished cortical division sites (CDS) during cytokinesis. In Zea mays (Maize), this protein is Microtubule-binding protein TANGLED1 (TAN1).